The sequence spans 222 residues: MDLPPTNDFCADPTVALRQRMVKQQIIARGVNDPAVLAALQQVPRHRFVPDSLQNLAYADQPLTIGYGQTISQPYIVAYMTEAAHLTPSSKVLEIGTGCGYQAAILAEIAQEVFTVEVVPELARQARDRLEALGYQNIHYKIGDGYQGWSEFAPYDAILVTAAPDHRPQPLLQQLAVGGHLVIPVGTVGQRLEVLHKTSTDLEMEKAIAVRFVPLQGHSYGF.

Serine 72 is a catalytic residue.

This sequence belongs to the methyltransferase superfamily. L-isoaspartyl/D-aspartyl protein methyltransferase family.

Its subcellular location is the cytoplasm. It carries out the reaction [protein]-L-isoaspartate + S-adenosyl-L-methionine = [protein]-L-isoaspartate alpha-methyl ester + S-adenosyl-L-homocysteine. Functionally, catalyzes the methyl esterification of L-isoaspartyl residues in peptides and proteins that result from spontaneous decomposition of normal L-aspartyl and L-asparaginyl residues. It plays a role in the repair and/or degradation of damaged proteins. This chain is Protein-L-isoaspartate O-methyltransferase, found in Picosynechococcus sp. (strain ATCC 27264 / PCC 7002 / PR-6) (Agmenellum quadruplicatum).